The primary structure comprises 375 residues: Chaperone protein DnaJ (375 aa).

Residues 4 to 68 (DYYEILGVSR…ETRARYDRFG (65 aa)) form the J domain. Residues 135-217 (GGEKEIRISH…CDGKGANQVT (83 aa)) form a CR-type zinc finger. The Zn(2+) site is built by Cys148, Cys151, Cys165, Cys168, Cys191, Cys194, Cys205, and Cys208. CXXCXGXG motif repeat units lie at residues 148–155 (CEVCSGSG), 165–172 (CSTCSGSG), 191–198 (CPTCNGTG), and 205–212 (CDACDGKG).

The protein belongs to the DnaJ family. Homodimer. The cofactor is Zn(2+).

The protein resides in the cytoplasm. Functionally, participates actively in the response to hyperosmotic and heat shock by preventing the aggregation of stress-denatured proteins and by disaggregating proteins, also in an autonomous, DnaK-independent fashion. Unfolded proteins bind initially to DnaJ; upon interaction with the DnaJ-bound protein, DnaK hydrolyzes its bound ATP, resulting in the formation of a stable complex. GrpE releases ADP from DnaK; ATP binding to DnaK triggers the release of the substrate protein, thus completing the reaction cycle. Several rounds of ATP-dependent interactions between DnaJ, DnaK and GrpE are required for fully efficient folding. Also involved, together with DnaK and GrpE, in the DNA replication of plasmids through activation of initiation proteins. This Nostoc punctiforme (strain ATCC 29133 / PCC 73102) protein is Chaperone protein DnaJ.